Here is a 373-residue protein sequence, read N- to C-terminus: Glutamate 5-kinase (373 aa).

Lys16 contributes to the ATP binding site. The substrate site is built by Ser56, Asp143, and Asn155. Residue 175–176 (TD) coordinates ATP. The 79-residue stretch at 281-359 (RGRLTLDDGA…SRIDSLLGYK (79 aa)) folds into the PUA domain.

It belongs to the glutamate 5-kinase family.

Its subcellular location is the cytoplasm. The enzyme catalyses L-glutamate + ATP = L-glutamyl 5-phosphate + ADP. It functions in the pathway amino-acid biosynthesis; L-proline biosynthesis; L-glutamate 5-semialdehyde from L-glutamate: step 1/2. Functionally, catalyzes the transfer of a phosphate group to glutamate to form L-glutamate 5-phosphate. The sequence is that of Glutamate 5-kinase from Saccharophagus degradans (strain 2-40 / ATCC 43961 / DSM 17024).